The chain runs to 740 residues: MNKRHALLLTAVLGMATAYAQTAPTTTTVNTLQTVYRDPSLTSAPITANVGKYVGPLSTFLASIAKSAGYEVVFNFNIDALALINGEIVFGNSTASVTTSYATPLGRPQELPAKPVVHNFSNAPFNEAWPLLMDVYELDYQLVKVGSANVIRIGQRPKQLALPLKFISAESALTAIEKFFGEEKFETVISLDSNNKPFQTTRPTGKFGLPNSIKVIPDSSNKRLIIGSNSEDGIRIRSFVETIDVQSSGKVISTDSISEIYIVRGQKESVLQFLRDSFPELIVTDYASGGLAIEGPRTSVNRAIILLGQVDRAPEIPIVQRIYTVRGQAADITALLAAQYPTLRVTPVGQTGQLVLNGAQAQLDTALALLEQVDRPAPVAESRTVQRVFQLVNASAEEVKATLEGTLARDLTADSNNDVLPNVPVTATDANGNTTVVSVPNALGKTANQGTANAQAQTAQTPANTQQATLIADKRTNSLIVRGTPEQVAQVAELVPQLDQVVPQINVQVRIQEVNERALQSLGLNWRATFGGFNVAVSGGTGLAATFNPTQSFLGFNIFPTLTALETQGLTRRVYDGNVTMQSGQRSLSATGGAQNASSGAAASVKSGGRLEINIPSAAGNIVRQIDYGLNLDFFSPQVAPDGTITLRIRGQVNQPATAITADSLPNLIDFTNSEAQSTITFKNGQTILMSGLLGSTETTNRSGVPFLSSLPGVGAAFGEKRTEKTQSQLLVIITGTVVK.

The first 20 residues, 1–20, serve as a signal peptide directing secretion; the sequence is MNKRHALLLTAVLGMATAYA.

This sequence belongs to the bacterial secretin family.

It is found in the cell envelope. In terms of biological role, could be part of the type IV piliation system (T4P). May contribute at the cohesion between the S-layer and the outer membrane by forming oligomers. Could also be the main channel through which trafficking is managed. This Deinococcus radiodurans (strain ATCC 13939 / DSM 20539 / JCM 16871 / CCUG 27074 / LMG 4051 / NBRC 15346 / NCIMB 9279 / VKM B-1422 / R1) protein is Probable type IV piliation system protein DR_0774.